A 510-amino-acid chain; its full sequence is MDAKEFREFGKAAIDYIADYLENIRDDDVLPNVEPGYLLDLLPTEMPEEPEAWKDVLGDISRVIKPGLTHWQSPHMHAYYPTSTSYPSIVGEMLASGFGVIGFSWICSPACTELEVVVMDWLAKFLKLPAHFQHASDGPGGGVIQGSASEAVLVAVLAAREQAVANYRESHPELSESEVRGRLVAYSSDQSNSCIEKAGVLAAMPIRLLPAGEDFVLRGDTLRGAIEEDVAAGRIPVICVATLGTTGTCAYDDIESLSAVCEEFKVWLHVDAAYAGGAFALEECSDLRKGLDRVDSLNFNLHKFMLVNFDCSAMWLRDANKVVDSFNVDRIYLKHKHEGQSQIPDFRHWQIPLGRRFRALKVWITFRTLGAEGLRNHVRKHIELAKQFEQLVLKDSRFELVAPRALGLVCFRPKGDNEITTQLLQRLMDRKKIYMVKAEHAGRQFLRFVVCGMDTKASDIDFAWQEIESQLTDLQAEQSLVARKSGNVGDLAQHFQIHLSTENATHEKSQ.

Asn-192 is an active-site residue. Lys-303 carries the N6-(pyridoxal phosphate)lysine modification.

The protein belongs to the group II decarboxylase family. Requires pyridoxal 5'-phosphate as cofactor.

It carries out the reaction L-dopa + O2 + H2O + H(+) = 3,4-dihydroxyphenylacetaldehyde + H2O2 + NH4(+) + CO2. Functionally, catalyzes the decarboxylation-oxidative deamination of L-3,4-dihydroxyphenylalanine (L-DOPA) to 3,4-dihydroxylphenylacetaldehyde (DHPAA). Involved in cuticle development. Probably responsible for the protein cross-linking during the development of flexible cuticles. In Drosophila melanogaster (Fruit fly), this protein is 3,4-dihydroxyphenylacetaldehyde synthase (amd).